Here is a 678-residue protein sequence, read N- to C-terminus: uncharacterized protein (678 aa).

8 consecutive transmembrane segments (helical) span residues 228–250 (FFVI…FSFL), 263–285 (LAMW…VATQ), 300–322 (STGA…LSCV), 334–356 (MLHN…AVLF), 361–380 (FSLS…FFSA), 387–405 (RIML…YAYL), 420–439 (NVFF…TLFF), and 455–477 (NLLL…SVSL). The disordered stretch occupies residues 653-678 (PSSQGVHATPEKNACIRDETVPNLQE).

Its subcellular location is the cell membrane. This is an uncharacterized protein from Treponema pallidum (strain Nichols).